We begin with the raw amino-acid sequence, 80 residues long: OMEGA-myrmeciitoxin(02)-Mg1a (80 aa).

The N-terminal stretch at 1-30 is a signal peptide; it reads MKNNYISTCIVYLMAALLLISVISIKECTA. The region spanning 35–75 is the EGF-like domain; that stretch reads YGDPCSDDLKDYCIHGDCFFLKELNQPACRCYTGYYGSRCE. Disulfide bonds link Cys39-Cys52, Cys47-Cys63, and Cys65-Cys74.

It belongs to the EGF domain peptide family. In terms of tissue distribution, expressed by the venom gland.

Its subcellular location is the secreted. In terms of biological role, ant peptide with probable defensive activity which acts as a potent agonist of the mammalian epidermal growth factor receptor (EGFR) (EC(50)=6.3 nM). Mimics, both structurally and functionally, vertebrate epidermal growth factor (EGF) peptide hormones. In vivo, intraplantar injection in mice causes long-lasting (several days) hypersensitivity of the injected paw to both mechanical and thermal stimuli. Its long-lasting effect is unusual for venom toxins whose effects are usually immediate. One possible explanation is that it would reduce the duration of a nest attack, discourage future attacks, or enhance the actions of subsequent exposure to other pain-inducing venom peptides. The sequence is that of OMEGA-myrmeciitoxin(02)-Mg1a from Myrmecia gulosa (Red bulldog ant).